The following is a 226-amino-acid chain: Ribose-5-phosphate isomerase A (226 aa).

Residues 33-36 (TGST), 86-89 (DGAD), and 99-102 (KGGG) each bind substrate. Glutamate 108 serves as the catalytic Proton acceptor. Substrate is bound at residue lysine 126.

This sequence belongs to the ribose 5-phosphate isomerase family. As to quaternary structure, homodimer.

The enzyme catalyses aldehydo-D-ribose 5-phosphate = D-ribulose 5-phosphate. It functions in the pathway carbohydrate degradation; pentose phosphate pathway; D-ribose 5-phosphate from D-ribulose 5-phosphate (non-oxidative stage): step 1/1. Its function is as follows. Catalyzes the reversible conversion of ribose-5-phosphate to ribulose 5-phosphate. The chain is Ribose-5-phosphate isomerase A from Bordetella parapertussis (strain 12822 / ATCC BAA-587 / NCTC 13253).